Reading from the N-terminus, the 30-residue chain is Cycloviolacin-O18 (30 aa).

The segment at residues G1 to N30 is a cross-link (cyclopeptide (Gly-Asn)). Disulfide bonds link C4-C21, C8-C23, and C13-C28.

Post-translationally, this is a cyclic peptide. As to expression, expressed in leaves, petals and petioles but not in roots and runners (at protein level).

Probably participates in a plant defense mechanism. This chain is Cycloviolacin-O18, found in Viola odorata (Sweet violet).